The chain runs to 425 residues: Tyrosine--tRNA ligase (425 aa).

Y37 provides a ligand contact to L-tyrosine. A 'HIGH' region motif is present at residues 42-51 (PTADSLHLGH). 2 residues coordinate L-tyrosine: Y174 and Q178. A 'KMSKS' region motif is present at residues 234 to 238 (KFGKS). K237 provides a ligand contact to ATP. Residues 357 to 422 (DGLIDALAAS…RGKKLYALLV (66 aa)) form the S4 RNA-binding domain.

This sequence belongs to the class-I aminoacyl-tRNA synthetase family. TyrS type 1 subfamily. As to quaternary structure, homodimer.

It localises to the cytoplasm. The catalysed reaction is tRNA(Tyr) + L-tyrosine + ATP = L-tyrosyl-tRNA(Tyr) + AMP + diphosphate + H(+). Its function is as follows. Catalyzes the attachment of tyrosine to tRNA(Tyr) in a two-step reaction: tyrosine is first activated by ATP to form Tyr-AMP and then transferred to the acceptor end of tRNA(Tyr). The chain is Tyrosine--tRNA ligase from Laribacter hongkongensis (strain HLHK9).